Reading from the N-terminus, the 143-residue chain is Endoribonuclease YbeY (143 aa).

Residues His109, His113, and His119 each contribute to the Zn(2+) site.

This sequence belongs to the endoribonuclease YbeY family. It depends on Zn(2+) as a cofactor.

It localises to the cytoplasm. In terms of biological role, single strand-specific metallo-endoribonuclease involved in late-stage 70S ribosome quality control and in maturation of the 3' terminus of the 16S rRNA. The sequence is that of Endoribonuclease YbeY from Leptospira borgpetersenii serovar Hardjo-bovis (strain JB197).